Consider the following 253-residue polypeptide: Putative glutamine amidotransferase PB2B2.05 (253 aa).

The 224-residue stretch at 5 to 228 folds into the Glutamine amidotransferase type-1 domain; sequence IIALSVGFSN…INRSKWHMKQ (224 aa). The active-site Nucleophile is the Cys100. Residues His200 and Glu202 contribute to the active site.

Its subcellular location is the cytoplasm. It localises to the nucleus. This Schizosaccharomyces pombe (strain 972 / ATCC 24843) (Fission yeast) protein is Putative glutamine amidotransferase PB2B2.05.